A 188-amino-acid polypeptide reads, in one-letter code: Elongation factor P (188 aa).

Belongs to the elongation factor P family.

Its subcellular location is the cytoplasm. The protein operates within protein biosynthesis; polypeptide chain elongation. Involved in peptide bond synthesis. Stimulates efficient translation and peptide-bond synthesis on native or reconstituted 70S ribosomes in vitro. Probably functions indirectly by altering the affinity of the ribosome for aminoacyl-tRNA, thus increasing their reactivity as acceptors for peptidyl transferase. This is Elongation factor P from Mycoplasma mobile (strain ATCC 43663 / 163K / NCTC 11711) (Mesomycoplasma mobile).